Here is a 773-residue protein sequence, read N- to C-terminus: Leucine-rich repeat and calponin homology domain-containing protein 2 (773 aa).

The disordered stretch occupies residues 1 to 46 (MAASQGGGGNSGGGGCSGGGSGGGGGAAGGGGGGGGGGGGGAGAGG). 9 LRR repeats span residues 97-118 (NSGI…GYDL), 120-141 (DTTQ…VWLF), 143-164 (PLET…IKNL), 166-187 (MLTY…LFDL), 188-209 (PLKV…IGKL), 211-232 (DLME…MGKL), 234-256 (SLKE…GDLP), 257-277 (LVKL…YRKL), and 279-300 (HLQV…ICLK). Disordered stretches follow at residues 324–409 (LDLP…QKDQ), 438–478 (FLKG…LKEV), and 573–633 (KYKS…SRQE). Basic and acidic residues-rich tracts occupy residues 386-396 (SNREQTSRNDS) and 440-466 (KGKE…KEQL). Residues 594-603 (AHMSAQSPVS) are compositionally biased toward polar residues. In terms of domain architecture, Calponin-homology (CH) spans 650–763 (LREEREQIRQ…VTVQALLELP (114 aa)).

Functionally, may play a role in the organization of the cytoskeleton. The polypeptide is Leucine-rich repeat and calponin homology domain-containing protein 2 (Lrch2) (Mus musculus (Mouse)).